Here is a 615-residue protein sequence, read N- to C-terminus: uncharacterized protein (615 aa).

Asp-403 acts as the Proton acceptor in catalysis. Glu-406 acts as the Proton donor in catalysis.

Belongs to the glycosyl hydrolase 15 family.

This is an uncharacterized protein from Methanocaldococcus jannaschii (strain ATCC 43067 / DSM 2661 / JAL-1 / JCM 10045 / NBRC 100440) (Methanococcus jannaschii).